The sequence spans 467 residues: Siroheme synthase 2 (467 aa).

Residues 1–204 (MDYLPIFCQL…NDVALAERQI (204 aa)) are precorrin-2 dehydrogenase /sirohydrochlorin ferrochelatase. NAD(+) contacts are provided by residues 22-23 (EI) and 43-44 (CS). At S128 the chain carries Phosphoserine. Residues 216-467 (GEVVLVGAGP…EPSQPLAQMA (252 aa)) are uroporphyrinogen-III C-methyltransferase. Residue P225 participates in S-adenosyl-L-methionine binding. The Proton acceptor role is filled by D248. The active-site Proton donor is K270. S-adenosyl-L-methionine contacts are provided by residues 301–303 (GGD), I306, 331–332 (TA), M382, and G411.

This sequence in the N-terminal section; belongs to the precorrin-2 dehydrogenase / sirohydrochlorin ferrochelatase family. It in the C-terminal section; belongs to the precorrin methyltransferase family.

The enzyme catalyses uroporphyrinogen III + 2 S-adenosyl-L-methionine = precorrin-2 + 2 S-adenosyl-L-homocysteine + H(+). The catalysed reaction is precorrin-2 + NAD(+) = sirohydrochlorin + NADH + 2 H(+). It carries out the reaction siroheme + 2 H(+) = sirohydrochlorin + Fe(2+). It participates in cofactor biosynthesis; adenosylcobalamin biosynthesis; precorrin-2 from uroporphyrinogen III: step 1/1. It functions in the pathway cofactor biosynthesis; adenosylcobalamin biosynthesis; sirohydrochlorin from precorrin-2: step 1/1. Its pathway is porphyrin-containing compound metabolism; siroheme biosynthesis; precorrin-2 from uroporphyrinogen III: step 1/1. The protein operates within porphyrin-containing compound metabolism; siroheme biosynthesis; siroheme from sirohydrochlorin: step 1/1. It participates in porphyrin-containing compound metabolism; siroheme biosynthesis; sirohydrochlorin from precorrin-2: step 1/1. Functionally, multifunctional enzyme that catalyzes the SAM-dependent methylations of uroporphyrinogen III at position C-2 and C-7 to form precorrin-2 via precorrin-1. Then it catalyzes the NAD-dependent ring dehydrogenation of precorrin-2 to yield sirohydrochlorin. Finally, it catalyzes the ferrochelation of sirohydrochlorin to yield siroheme. The sequence is that of Siroheme synthase 2 from Serratia proteamaculans (strain 568).